The sequence spans 103 residues: Alkanal monooxygenase alpha chain (103 aa).

As to quaternary structure, heterodimer of an alpha and a beta chain.

The catalysed reaction is a long-chain fatty aldehyde + FMNH2 + O2 = a long-chain fatty acid + hnu + FMN + H2O + 2 H(+). In terms of biological role, light-emitting reaction in luminous bacteria. This Vibrio cholerae protein is Alkanal monooxygenase alpha chain (luxA).